The primary structure comprises 209 residues: Vacuolar protein sorting-associated protein 28 homolog (209 aa).

A VPS28 N-terminal domain is found at methionine 1–aspartate 105. Residues asparagine 109–asparagine 205 enclose the VPS28 C-terminal domain.

Belongs to the VPS28 family. As to quaternary structure, component of the ESCRT-I complex (endosomal sorting complex required for transport I).

The protein localises to the endosome. Functionally, component of the ESCRT-I complex, a regulator of vesicular trafficking process. The chain is Vacuolar protein sorting-associated protein 28 homolog from Caenorhabditis briggsae.